Here is a 2294-residue protein sequence, read N- to C-terminus: Protein Ycf2 (2294 aa).

Position 1648 to 1655 (1648 to 1655 (GSIGTGRS)) interacts with ATP.

Belongs to the Ycf2 family.

It localises to the plastid. The protein resides in the chloroplast stroma. Probable ATPase of unknown function. Its presence in a non-photosynthetic plant (Epifagus virginiana) and experiments in tobacco indicate that it has an essential function which is probably not related to photosynthesis. The chain is Protein Ycf2 from Arabidopsis thaliana (Mouse-ear cress).